The following is a 379-amino-acid chain: Succinyl-diaminopimelate desuccinylase (379 aa).

His-70 is a Zn(2+) binding site. Asp-72 is a catalytic residue. Zn(2+) is bound at residue Asp-103. Residue Glu-137 is the Proton acceptor of the active site. Zn(2+)-binding residues include Glu-138, Glu-166, and His-352.

This sequence belongs to the peptidase M20A family. DapE subfamily. In terms of assembly, homodimer. Zn(2+) is required as a cofactor. Co(2+) serves as cofactor.

The enzyme catalyses N-succinyl-(2S,6S)-2,6-diaminopimelate + H2O = (2S,6S)-2,6-diaminopimelate + succinate. It functions in the pathway amino-acid biosynthesis; L-lysine biosynthesis via DAP pathway; LL-2,6-diaminopimelate from (S)-tetrahydrodipicolinate (succinylase route): step 3/3. Functionally, catalyzes the hydrolysis of N-succinyl-L,L-diaminopimelic acid (SDAP), forming succinate and LL-2,6-diaminopimelate (DAP), an intermediate involved in the bacterial biosynthesis of lysine and meso-diaminopimelic acid, an essential component of bacterial cell walls. The protein is Succinyl-diaminopimelate desuccinylase of Shewanella baltica (strain OS195).